We begin with the raw amino-acid sequence, 611 residues long: MPSRAVRRCPGHLCKEMRAPRRAQPPDVPAGEPGSRVTWSRQMDFIMSCVGFAVGLGNVWRFPYLCYKNGGGVFLIPYLLVAVFGGIPIFFLEISLGQFMKAGGINAWNIAPLFKGLGYASMVIVFFCNTYYILVLTWSSFYLVQSFSSPLPWASCNNTWNTAACYEAGANASTEIYPPTAPAQSSIVQFWERRVLRLSSGLGDVGEIGWELTLCLTATWMLVYFCIWKGVKTSGKVVYVTATFPYIILVILLVRGVTLHGAVQGIVYYLQPDWGKLGEAQVWIDAGTQIFFSYAIGLGTLTALGSYNQLHNDCYKDAFILSLVNSATSFFAGLVVFSILGFMAVEEGVDISVVAESGPGLAFIAYPKAVTLMPFPQVWAVLFFIMLLCLGLGSQFVGVEGFVTAILDLWPSKFSFRYLREVVVAMVICLSFLIDLSMITEGGMYIFQIFDYYSASGTTLLWTAFWECVAVAWVYGGDRYLDDLAWMLGYRPWALVKWCWSVITPLVCMGIFTFHLVNYKPLTYNKTYTYPWWGEAIGWCLALASMLCVPTTVLYSLSRGRGSLKERWRKLTTPVWASHHLAYKMAGAKINQPCEGVVSCEEKVVIFESVL.

A helical transmembrane segment spans residues 45-65 (FIMSCVGFAVGLGNVWRFPYL). The Extracellular segment spans residues 66 to 71 (CYKNGG). Residues 72-92 (GVFLIPYLLVAVFGGIPIFFL) form a helical membrane-spanning segment. Residues 93-122 (EISLGQFMKAGGINAWNIAPLFKGLGYASM) are Cytoplasmic-facing. The chain crosses the membrane as a helical span at residues 123–143 (VIVFFCNTYYILVLTWSSFYL). At 144-207 (VQSFSSPLPW…LSSGLGDVGE (64 aa)) the chain is on the extracellular side. Asn157 and Asn171 each carry an N-linked (GlcNAc...) asparagine glycan. The chain crosses the membrane as a helical span at residues 208 to 228 (IGWELTLCLTATWMLVYFCIW). Topologically, residues 229–246 (KGVKTSGKVVYVTATFPY) are cytoplasmic. A helical transmembrane segment spans residues 247-267 (IILVILLVRGVTLHGAVQGIV). Topologically, residues 268–281 (YYLQPDWGKLGEAQ) are extracellular. A helical transmembrane segment spans residues 282 to 302 (VWIDAGTQIFFSYAIGLGTLT). The Cytoplasmic segment spans residues 303–318 (ALGSYNQLHNDCYKDA). Residues 319–339 (FILSLVNSATSFFAGLVVFSI) form a helical membrane-spanning segment. The Extracellular portion of the chain corresponds to 340–371 (LGFMAVEEGVDISVVAESGPGLAFIAYPKAVT). The helical transmembrane segment at 372-392 (LMPFPQVWAVLFFIMLLCLGL) threads the bilayer. Over 393-421 (GSQFVGVEGFVTAILDLWPSKFSFRYLRE) the chain is Cytoplasmic. The chain crosses the membrane as a helical span at residues 422-442 (VVVAMVICLSFLIDLSMITEG). Residues 443-456 (GMYIFQIFDYYSAS) are Extracellular-facing. The chain crosses the membrane as a helical span at residues 457–477 (GTTLLWTAFWECVAVAWVYGG). The Cytoplasmic segment spans residues 478-497 (DRYLDDLAWMLGYRPWALVK). Residues 498–518 (WCWSVITPLVCMGIFTFHLVN) traverse the membrane as a helical segment. Over 519-537 (YKPLTYNKTYTYPWWGEAI) the chain is Extracellular. The N-linked (GlcNAc...) asparagine glycan is linked to Asn525. A helical membrane pass occupies residues 538–558 (GWCLALASMLCVPTTVLYSLS). The Cytoplasmic segment spans residues 559 to 611 (RGRGSLKERWRKLTTPVWASHHLAYKMAGAKINQPCEGVVSCEEKVVIFESVL).

The protein belongs to the sodium:neurotransmitter symporter (SNF) (TC 2.A.22) family.

Its subcellular location is the membrane. In terms of biological role, required for the uptake of creatine. The chain is Creatine transporter from Torpedo marmorata (Marbled electric ray).